The chain runs to 749 residues: Putative Xaa-Pro aminopeptidase FRA1 (749 aa).

A disordered region spans residues 1 to 33 (MTSKPSTSDGRAHSISHVPGTHMRGTSASHSPR). A phosphoserine mark is found at Ser69, Ser92, and Ser95. Residues Asp551, Asp562, Glu660, and Glu674 each contribute to the Mn(2+) site.

This sequence belongs to the peptidase M24B family. As to quaternary structure, homodimer. Interacts with FRA2. Mn(2+) serves as cofactor.

Its subcellular location is the cytoplasm. The catalysed reaction is Release of any N-terminal amino acid, including proline, that is linked to proline, even from a dipeptide or tripeptide.. In terms of biological role, involved in the regulation of the iron regulon in responss to decreased mitochondrial iron-sulfur cluster synthesis. The protein is Putative Xaa-Pro aminopeptidase FRA1 (FRA1) of Saccharomyces cerevisiae (strain ATCC 204508 / S288c) (Baker's yeast).